An 876-amino-acid chain; its full sequence is Senescence-induced receptor-like serine/threonine-protein kinase (876 aa).

Residues 1–24 form the signal peptide; the sequence is MAMLKSLSSILFTSFALLFFLVHA. The Extracellular segment spans residues 25–517; sequence QDQSGFISID…SNTKKKNKNG (493 aa). LRR repeat units lie at residues 415–438, 439–462, and 463–483; these read RVVSLNISFSELRGQIDPAFSNLT, SIRKLDLSGNTLTGEIPAFLANLP, and NLTELNVEGNKLTGIVPQRLH. A helical membrane pass occupies residues 518-538; it reads YIIPLVVVGIIVVLLTALALF. At 539 to 876 the chain is on the cytoplasmic side; it reads RRFKKKQQRG…LDTEMVPRAR (338 aa). The region spanning 574 to 847 is the Protein kinase domain; the sequence is NNFERVIGKG…VVMELKQIVY (274 aa). ATP contacts are provided by residues 580-588 and Lys-601; that span reads IGKGGFGKV. Tyr-646 carries the phosphotyrosine modification. Residue Asp-697 is the Proton acceptor of the active site. At Ser-731 the chain carries Phosphoserine. Thr-732 is subject to Phosphothreonine. A Phosphotyrosine modification is found at Tyr-745.

Belongs to the protein kinase superfamily. Ser/Thr protein kinase family.

The protein resides in the membrane. Functionally, involved in innate immune response of plants. This Arabidopsis thaliana (Mouse-ear cress) protein is Senescence-induced receptor-like serine/threonine-protein kinase (SIRK).